Reading from the N-terminus, the 146-residue chain is Leghemoglobin Lb120-34 (146 aa).

One can recognise a Globin domain in the interval 2-146; sequence GFTEKQEALV…LASAIKKAMN (145 aa). Residues tyrosine 24 and tyrosine 29 each carry the nitrated tyrosine modification. Serine 44 provides a ligand contact to heme b. A Phosphoserine modification is found at serine 44. Histidine 61 provides a ligand contact to O2. Residues lysine 64, histidine 93, and lysine 96 each contribute to the heme b site. Tyrosine 134 bears the Nitrated tyrosine mark.

It belongs to the plant globin family. Monomer. In terms of processing, nitrated in effective nodules and particularly in hypoxic conditions; this mechanism may play a protective role in the symbiosis by buffering toxic peroxynitrite NO(2)(-). Nitration level decrease during nodule senescence. Phosphorylation at Ser-44 disrupts the molecular environment of its porphyrin ring oxygen binding pocket, thus leading to a reduced oxygen consumption and to the delivery of oxygen O(2) to symbiosomes. As to expression, root nodules.

Its subcellular location is the cytoplasm. It localises to the cytosol. It is found in the nucleus. Its function is as follows. Leghemoglobin that reversibly binds oxygen O(2) through a pentacoordinated heme iron. In root nodules, facilitates the diffusion of oxygen to the bacteroids while preventing the bacterial nitrogenase from being inactivated by buffering dioxygen, nitric oxide and carbon monoxide, and promoting the formation of reactive oxygen species (ROS, e.g. H(2)O(2)). This role is essential for symbiotic nitrogen fixation (SNF). This Pisum sativum (Garden pea) protein is Leghemoglobin Lb120-34.